A 184-amino-acid chain; its full sequence is Peptide deformylase (184 aa).

Fe cation is bound by residues C111 and H154. E155 is an active-site residue. A Fe cation-binding site is contributed by H158.

It belongs to the polypeptide deformylase family. It depends on Fe(2+) as a cofactor.

The catalysed reaction is N-terminal N-formyl-L-methionyl-[peptide] + H2O = N-terminal L-methionyl-[peptide] + formate. Its function is as follows. Removes the formyl group from the N-terminal Met of newly synthesized proteins. Requires at least a dipeptide for an efficient rate of reaction. N-terminal L-methionine is a prerequisite for activity but the enzyme has broad specificity at other positions. This is Peptide deformylase from Pediococcus pentosaceus (strain ATCC 25745 / CCUG 21536 / LMG 10740 / 183-1w).